A 378-amino-acid chain; its full sequence is O-glycoside alpha-1,2-mannosyltransferase homolog 3 (378 aa).

Residues 1-6 (MGIPKS) lie on the Cytoplasmic side of the membrane. Residues 7–24 (SIYFCILLFCIISFYLQS) form a helical; Signal-anchor for type II membrane protein membrane-spanning segment. The Lumenal segment spans residues 25-378 (SKDGPKELKV…AIKWLENINS (354 aa)). The active-site Nucleophile is Glu-276.

The protein belongs to the glycosyltransferase 15 family.

It is found in the endoplasmic reticulum membrane. The protein localises to the golgi apparatus membrane. Functionally, probable mannosyltransferase involved in O-glycosylation of cell wall and secreted proteins. In Schizosaccharomyces pombe (strain 972 / ATCC 24843) (Fission yeast), this protein is O-glycoside alpha-1,2-mannosyltransferase homolog 3 (omh3).